A 200-amino-acid chain; its full sequence is NADH-quinone oxidoreductase subunit C (200 aa).

The protein belongs to the complex I 30 kDa subunit family. In terms of assembly, NDH-1 is composed of 14 different subunits. Subunits NuoB, C, D, E, F, and G constitute the peripheral sector of the complex.

It localises to the cell inner membrane. The catalysed reaction is a quinone + NADH + 5 H(+)(in) = a quinol + NAD(+) + 4 H(+)(out). Functionally, NDH-1 shuttles electrons from NADH, via FMN and iron-sulfur (Fe-S) centers, to quinones in the respiratory chain. The immediate electron acceptor for the enzyme in this species is believed to be ubiquinone. Couples the redox reaction to proton translocation (for every two electrons transferred, four hydrogen ions are translocated across the cytoplasmic membrane), and thus conserves the redox energy in a proton gradient. The sequence is that of NADH-quinone oxidoreductase subunit C from Rhizobium johnstonii (strain DSM 114642 / LMG 32736 / 3841) (Rhizobium leguminosarum bv. viciae).